Here is a 685-residue protein sequence, read N- to C-terminus: DNA ligase (685 aa).

NAD(+)-binding positions include 48–52 (DAEYD), 97–98 (SL), and Glu131. Residue Lys133 is the N6-AMP-lysine intermediate of the active site. The NAD(+) site is built by Arg154, Glu190, Lys304, and Lys328. Residues Cys422, Cys425, Cys440, and Cys445 each contribute to the Zn(2+) site. Positions 603-685 (PEEGPLSGRR…RLLSGEERPG (83 aa)) constitute a BRCT domain.

Belongs to the NAD-dependent DNA ligase family. LigA subfamily. The cofactor is Mg(2+). Mn(2+) serves as cofactor.

The enzyme catalyses NAD(+) + (deoxyribonucleotide)n-3'-hydroxyl + 5'-phospho-(deoxyribonucleotide)m = (deoxyribonucleotide)n+m + AMP + beta-nicotinamide D-nucleotide.. Functionally, DNA ligase that catalyzes the formation of phosphodiester linkages between 5'-phosphoryl and 3'-hydroxyl groups in double-stranded DNA using NAD as a coenzyme and as the energy source for the reaction. It is essential for DNA replication and repair of damaged DNA. This is DNA ligase from Rubrobacter xylanophilus (strain DSM 9941 / JCM 11954 / NBRC 16129 / PRD-1).